The primary structure comprises 249 residues: Large ribosomal subunit protein uL10m (249 aa).

The transit peptide at 1-31 (MLQLRFMPGWVPRNGFFGLKETIGTVHKRFY) directs the protein to the mitochondrion. The segment at 226–249 (SHNDNQKPKEDVESTTDAESKGSK) is disordered.

Belongs to the universal ribosomal protein uL10 family. In terms of assembly, component of the mitochondrial large ribosomal subunit (mt-LSU). Mature yeast 74S mitochondrial ribosomes consist of a small (37S) and a large (54S) subunit. The 37S small subunit contains a 15S ribosomal RNA (15S mt-rRNA) and 34 different proteins. The 54S large subunit contains a 21S rRNA (21S mt-rRNA) and 46 different proteins.

Its subcellular location is the mitochondrion. Functionally, component of the mitochondrial ribosome (mitoribosome), a dedicated translation machinery responsible for the synthesis of mitochondrial genome-encoded proteins, including at least some of the essential transmembrane subunits of the mitochondrial respiratory chain. The mitoribosomes are attached to the mitochondrial inner membrane and translation products are cotranslationally integrated into the membrane. The protein is Large ribosomal subunit protein uL10m (MRPL11) of Saccharomyces cerevisiae (strain ATCC 204508 / S288c) (Baker's yeast).